A 328-amino-acid polypeptide reads, in one-letter code: Interleukin-12 subunit beta (328 aa).

A signal peptide spans 1 to 22; that stretch reads MCHQQLVISWFSLVFLASPLMA. The Ig-like C2-type domain maps to 29–106; the sequence is DVYVVELDWY…LSHSLLLLHK (78 aa). Cys50 and Cys90 are joined by a disulfide. Residues Asn125, Asn135, and Asn222 are each glycosylated (N-linked (GlcNAc...) asparagine). Positions 237-328 constitute a Fibronectin type-III domain; sequence PPKNLQLKPL…WSEWASVPCS (92 aa).

This sequence belongs to the IL-12B family. As to quaternary structure, heterodimer with IL12A; disulfide-linked. The heterodimer is known as interleukin IL-12. Heterodimer with IL23A; disulfide-linked. The heterodimer is known as interleukin IL-23. Also secreted as a monomer. Interacts with NBR1; this interaction promotes IL-12 secretion.

It is found in the secreted. Functionally, cytokine that can act as a growth factor for activated T and NK cells, enhance the lytic activity of NK/lymphokine-activated killer cells, and stimulate the production of IFN-gamma by resting PBMC. In terms of biological role, associates with IL23A to form the IL-23 interleukin, a heterodimeric cytokine which functions in innate and adaptive immunity. IL-23 may constitute with IL-17 an acute response to infection in peripheral tissues. IL-23 binds to a heterodimeric receptor complex composed of IL12RB1 and IL23R, activates the Jak-Stat signaling cascade, stimulates memory rather than naive T-cells and promotes production of pro-inflammatory cytokines. IL-23 induces autoimmune inflammation and thus may be responsible for autoimmune inflammatory diseases and may be important for tumorigenesis. This chain is Interleukin-12 subunit beta (IL12B), found in Macaca mulatta (Rhesus macaque).